Here is a 511-residue protein sequence, read N- to C-terminus: Lysine--tRNA ligase (511 aa).

Residues Glu421 and Glu428 each contribute to the Mg(2+) site.

This sequence belongs to the class-II aminoacyl-tRNA synthetase family. As to quaternary structure, homodimer. It depends on Mg(2+) as a cofactor.

It is found in the cytoplasm. The catalysed reaction is tRNA(Lys) + L-lysine + ATP = L-lysyl-tRNA(Lys) + AMP + diphosphate. The chain is Lysine--tRNA ligase from Aeromonas hydrophila subsp. hydrophila (strain ATCC 7966 / DSM 30187 / BCRC 13018 / CCUG 14551 / JCM 1027 / KCTC 2358 / NCIMB 9240 / NCTC 8049).